Here is a 129-residue protein sequence, read N- to C-terminus: Lysozyme C (129 aa).

One can recognise a C-type lysozyme domain in the interval 1–129; it reads KVYGRCELAA…VQAWIRGCRL (129 aa). Cystine bridges form between Cys-6–Cys-127, Cys-30–Cys-115, Cys-64–Cys-80, and Cys-76–Cys-94. Active-site residues include Glu-35 and Asp-52.

The protein belongs to the glycosyl hydrolase 22 family. In terms of assembly, monomer.

It is found in the secreted. It catalyses the reaction Hydrolysis of (1-&gt;4)-beta-linkages between N-acetylmuramic acid and N-acetyl-D-glucosamine residues in a peptidoglycan and between N-acetyl-D-glucosamine residues in chitodextrins.. Functionally, lysozymes have primarily a bacteriolytic function; those in tissues and body fluids are associated with the monocyte-macrophage system and enhance the activity of immunoagents. The chain is Lysozyme C (LYZ) from Tragopan satyra (Satyr tragopan).